Here is a 302-residue protein sequence, read N- to C-terminus: Protoheme IX farnesyltransferase (302 aa).

9 helical membrane-spanning segments follow: residues 28-48, 50-70, 93-115, 119-138, 147-167, 172-192, 219-239, 242-262, and 271-291; these read LALLMLTMYGAYFAGGGSLDP, MLALLTIMGFTSIGGVTAFNM, LNPYEALAGSLALVIAGVLSAAA, YVALTVIAGLYFDIIAYTQL, IIFGSIAGSMPALGGWAAAAG, GGVLMALIVFLWQPMHVWFLG, LIAVSLAGLIAVAWAFALYYG, FLTAVITTVLAALAISRIGGF, and ALKLFKFASPIIAVVFIILPL.

Belongs to the UbiA prenyltransferase family. Protoheme IX farnesyltransferase subfamily.

It is found in the cell membrane. The enzyme catalyses heme b + (2E,6E)-farnesyl diphosphate + H2O = Fe(II)-heme o + diphosphate. It functions in the pathway porphyrin-containing compound metabolism; heme O biosynthesis; heme O from protoheme: step 1/1. In terms of biological role, converts heme B (protoheme IX) to heme O by substitution of the vinyl group on carbon 2 of heme B porphyrin ring with a hydroxyethyl farnesyl side group. This chain is Protoheme IX farnesyltransferase, found in Aeropyrum pernix (strain ATCC 700893 / DSM 11879 / JCM 9820 / NBRC 100138 / K1).